A 137-amino-acid chain; its full sequence is Holo-[acyl-carrier-protein] synthase (137 aa).

Mg(2+) is bound by residues aspartate 8 and glutamate 57.

Belongs to the P-Pant transferase superfamily. AcpS family. It depends on Mg(2+) as a cofactor.

The protein localises to the cytoplasm. It carries out the reaction apo-[ACP] + CoA = holo-[ACP] + adenosine 3',5'-bisphosphate + H(+). Functionally, transfers the 4'-phosphopantetheine moiety from coenzyme A to a Ser of acyl-carrier-protein. In Cereibacter sphaeroides (strain ATCC 17025 / ATH 2.4.3) (Rhodobacter sphaeroides), this protein is Holo-[acyl-carrier-protein] synthase.